Consider the following 224-residue polypeptide: MQFPAFYVTGTDTGIGKTVASTALLHAVRARGHTAVGMKPVASGCVATPQGWHNEDALALQAASQPQPDYATLNPYALPAALAPELAAADVGVSLSLVPLQLAFAQLRAQAEVVVVEGVGGWAAPLSAQLDQADLVRTLQLPVVLVVGVRLGCINHARLTAAAIAADGLRCIGWIANEIDPQMERIEDNIRMLGQRLAMPCWGRIPWRPNAQAEGLAQHIRLPE.

14-19 (GIGKTV) is a binding site for ATP. Thr-18 is a binding site for Mg(2+). Lys-39 is a catalytic residue. Ser-43 is a substrate binding site. ATP contacts are provided by residues Asp-56, 117–120 (EGVG), and 177–178 (NE). Mg(2+) is bound by residues Asp-56 and Glu-117.

This sequence belongs to the dethiobiotin synthetase family. As to quaternary structure, homodimer. It depends on Mg(2+) as a cofactor.

Its subcellular location is the cytoplasm. It carries out the reaction (7R,8S)-7,8-diammoniononanoate + CO2 + ATP = (4R,5S)-dethiobiotin + ADP + phosphate + 3 H(+). The protein operates within cofactor biosynthesis; biotin biosynthesis; biotin from 7,8-diaminononanoate: step 1/2. Functionally, catalyzes a mechanistically unusual reaction, the ATP-dependent insertion of CO2 between the N7 and N8 nitrogen atoms of 7,8-diaminopelargonic acid (DAPA, also called 7,8-diammoniononanoate) to form a ureido ring. The protein is ATP-dependent dethiobiotin synthetase BioD of Xanthomonas campestris pv. campestris (strain B100).